Consider the following 617-residue polypeptide: Electron transfer flavoprotein-ubiquinone oxidoreductase, mitochondrial (617 aa).

The N-terminal 33 residues, 1–33 (MMVPLAKLASPAYQCFHALKIKKNYLPLCATRW), are a transit peptide targeting the mitochondrion. 75–80 (GAGPAG) is an FAD binding site. An N6-acetyllysine modification is found at lysine 96. The stretch at 109–130 (IGAHTLSGACLDPRAFEELFPD) is an intramembrane region. Lysine 132 and lysine 223 each carry N6-acetyllysine. Residues glycine 305 and glycine 306 each contribute to the a ubiquinone site. Lysine 357 is modified (N6-acetyllysine). An intramembrane segment occupies 428–447 (IGLHVTEYEDNLKNSWVWKE). The residue at position 551 (serine 551) is a Phosphoserine. [4Fe-4S] cluster is bound by residues cysteine 561, cysteine 586, cysteine 589, and cysteine 592. The 4Fe-4S ferredoxin-type domain maps to 577-606 (FRLQINAQNCVHCKTCDIKDPSQNINWVVP).

As to quaternary structure, monomer. [4Fe-4S] cluster serves as cofactor. Requires FAD as cofactor.

It is found in the mitochondrion inner membrane. It carries out the reaction a ubiquinone + reduced [electron-transfer flavoprotein] = a ubiquinol + oxidized [electron-transfer flavoprotein] + H(+). Functionally, accepts electrons from ETF and reduces ubiquinone. In Sus scrofa (Pig), this protein is Electron transfer flavoprotein-ubiquinone oxidoreductase, mitochondrial (ETFDH).